Consider the following 341-residue polypeptide: Anthranilate phosphoribosyltransferase (341 aa).

Residues Gly82, 85–86 (GD), Thr90, 92–95 (NIST), 110–118 (KHGGRSVSG), and Ser122 contribute to the 5-phospho-alpha-D-ribose 1-diphosphate site. Anthranilate is bound at residue Gly82. Position 94 (Ser94) interacts with Mg(2+). Arg168 serves as a coordination point for anthranilate. Mg(2+)-binding residues include Asp227 and Glu228.

Belongs to the anthranilate phosphoribosyltransferase family. As to quaternary structure, homodimer. The cofactor is Mg(2+).

The enzyme catalyses N-(5-phospho-beta-D-ribosyl)anthranilate + diphosphate = 5-phospho-alpha-D-ribose 1-diphosphate + anthranilate. Its pathway is amino-acid biosynthesis; L-tryptophan biosynthesis; L-tryptophan from chorismate: step 2/5. In terms of biological role, catalyzes the transfer of the phosphoribosyl group of 5-phosphorylribose-1-pyrophosphate (PRPP) to anthranilate to yield N-(5'-phosphoribosyl)-anthranilate (PRA). The chain is Anthranilate phosphoribosyltransferase from Nitrosomonas europaea (strain ATCC 19718 / CIP 103999 / KCTC 2705 / NBRC 14298).